The following is a 195-amino-acid chain: Glycine-rich protein A3 (195 aa).

Disordered stretches follow at residues 23–103 and 159–182; these read AGGG…GVAG and VMESLSRESTGRARSTDTRSGSNL. The span at 47–77 shows a compositional bias: gly residues; the sequence is PAGGGYPPQGYPPAGGGYPPQGYPPAGGGYP. Residues 82–94 are compositionally biased toward low complexity; that stretch reads PPAGHHSGSSAPH. The segment covering 163-175 has biased composition (basic and acidic residues); it reads LSRESTGRARSTD.

The protein is Glycine-rich protein A3 of Daucus carota (Wild carrot).